A 418-amino-acid chain; its full sequence is MYQSNKKKRLWKEEKERLLNMTRDERRKEYREYVSLDKIPSLMEELKSKASSDDESPEEIQVKNSLCEKVSFYKGDITQLEVDAIVNAANTSLLGGGGVDGCIHRASGPSLLAECRELGGCETGQAKITCGYELPAKYVIHTVGPIARGHITPNHKQDLASCYNSSLTLATENDIRTIAFPCISTGIYGYPNEPAANVALTTVKEFLKKNRDKIDRVIFCVFLEVDFKIYKRKLNEFFPKDGGDDEEGEKGDSDEMKEDTEGKPQSPPMKKIKEKKEDTPAPDSPDEEYSAEEATGNTQDMTAMSLETNEGNDVSSPATDPLKEGEELSEAKITGEKISVEPKTPEPEDAKMTVEEKSQEQEDSENMETSQPKVSGETEDLDGDSEEPSDVQKEIASPSNETCQESDPKDTNDDANEA.

The Macro domain maps to 57–238; that stretch reads PEEIQVKNSL…IYKRKLNEFF (182 aa). Residues 75–77, 88–90, 95–100, 183–189, and Phe222 contribute to the substrate site; these read GDI, AAN, GGGGVD, and ISTGIYG. The interval 238–418 is disordered; it reads FPKDGGDDEE…KDTNDDANEA (181 aa). Residues 250–262 are compositionally biased toward basic and acidic residues; it reads KGDSDEMKEDTEG. Positions 295–318 are enriched in polar residues; sequence TGNTQDMTAMSLETNEGNDVSSPA. The span at 321–360 shows a compositional bias: basic and acidic residues; sequence PLKEGEELSEAKITGEKISVEPKTPEPEDAKMTVEEKSQE. Residues 377–389 show a composition bias toward acidic residues; that stretch reads ETEDLDGDSEEPS.

This sequence belongs to the MacroD-type family. MacroD1/2-like subfamily.

It localises to the nucleus. The catalysed reaction is 2''-O-acetyl-ADP-D-ribose + H2O = ADP-D-ribose + acetate + H(+). It catalyses the reaction 4-O-(ADP-D-ribosyl)-L-aspartyl-[protein] + H2O = L-aspartyl-[protein] + ADP-D-ribose + H(+). It carries out the reaction 5-O-(ADP-D-ribosyl)-L-glutamyl-[protein] + H2O = L-glutamyl-[protein] + ADP-D-ribose + H(+). The enzyme catalyses alpha-NAD(+) + H2O = ADP-D-ribose + nicotinamide + H(+). With respect to regulation, subject to product inhibition by ADP-ribose. Its function is as follows. Removes ADP-ribose from aspartate and glutamate residues in proteins bearing a single ADP-ribose moiety. Inactive towards proteins bearing poly-ADP-ribose. Deacetylates O-acetyl-ADP ribose, a signaling molecule generated by the deacetylation of acetylated lysine residues in histones and other proteins. This chain is ADP-ribose glycohydrolase MACROD2, found in Xenopus laevis (African clawed frog).